Consider the following 434-residue polypeptide: Serine--tRNA ligase (434 aa).

230–232 (TSE) provides a ligand contact to L-serine. ATP contacts are provided by residues 261–263 (RRE) and Val-277. Residue Glu-284 participates in L-serine binding. 348–351 (ELTS) contributes to the ATP binding site. Thr-393 lines the L-serine pocket.

The protein belongs to the class-II aminoacyl-tRNA synthetase family. Type-1 seryl-tRNA synthetase subfamily. As to quaternary structure, homodimer. The tRNA molecule binds across the dimer.

It is found in the cytoplasm. It catalyses the reaction tRNA(Ser) + L-serine + ATP = L-seryl-tRNA(Ser) + AMP + diphosphate + H(+). The enzyme catalyses tRNA(Sec) + L-serine + ATP = L-seryl-tRNA(Sec) + AMP + diphosphate + H(+). Its pathway is aminoacyl-tRNA biosynthesis; selenocysteinyl-tRNA(Sec) biosynthesis; L-seryl-tRNA(Sec) from L-serine and tRNA(Sec): step 1/1. Its function is as follows. Catalyzes the attachment of serine to tRNA(Ser). Is also able to aminoacylate tRNA(Sec) with serine, to form the misacylated tRNA L-seryl-tRNA(Sec), which will be further converted into selenocysteinyl-tRNA(Sec). This chain is Serine--tRNA ligase, found in Kocuria rhizophila (strain ATCC 9341 / DSM 348 / NBRC 103217 / DC2201).